The chain runs to 233 residues: Orotidine 5'-phosphate decarboxylase (233 aa).

Substrate contacts are provided by residues D10, K32, 60–69 (DLKLHDIPAT), T115, R176, Q185, G205, and R206. The active-site Proton donor is K62.

It belongs to the OMP decarboxylase family. Type 1 subfamily. As to quaternary structure, homodimer.

The catalysed reaction is orotidine 5'-phosphate + H(+) = UMP + CO2. It participates in pyrimidine metabolism; UMP biosynthesis via de novo pathway; UMP from orotate: step 2/2. Its function is as follows. Catalyzes the decarboxylation of orotidine 5'-monophosphate (OMP) to uridine 5'-monophosphate (UMP). In Thermobifida fusca (strain YX), this protein is Orotidine 5'-phosphate decarboxylase.